The primary structure comprises 284 residues: Tropomyosin-1 (284 aa).

Disordered regions lie at residues 1 to 26 (MDAI…DTCE) and 96 to 124 (EEDL…DENN). The stretch at 1–276 (MDAIKKKMQA…YKSLADEMDS (276 aa)) forms a coiled coil. Basic and acidic residues predominate over residues 12-26 (KLEKDNAMDKADTCE). The segment covering 107–121 (GTAQQKLLEAQQSAD) has biased composition (polar residues).

This sequence belongs to the tropomyosin family. As to quaternary structure, homodimer.

In terms of biological role, tropomyosin, in association with the troponin complex, plays a central role in the calcium dependent regulation of muscle contraction. In Bombyx mori (Silk moth), this protein is Tropomyosin-1.